A 230-amino-acid polypeptide reads, in one-letter code: Large ribosomal subunit protein uL1 (230 aa).

It belongs to the universal ribosomal protein uL1 family. In terms of assembly, part of the 50S ribosomal subunit.

In terms of biological role, binds directly to 23S rRNA. The L1 stalk is quite mobile in the ribosome, and is involved in E site tRNA release. Protein L1 is also a translational repressor protein, it controls the translation of the L11 operon by binding to its mRNA. The chain is Large ribosomal subunit protein uL1 from Nitrobacter hamburgensis (strain DSM 10229 / NCIMB 13809 / X14).